The chain runs to 320 residues: MEEVPHDCPGADSAQAGRGASCQGCPNQRLCASGAGATPDTAIEEIKEKMKTVKHKILVLSGKGGVGKSTFSAHLAHGLAEDENTQIALLDIDICGPSIPKIMGLEGEQVHQSGSGWSPVYVEDNLGVMSVGFLLSSPDDAVIWRGPKKNGMIKQFLRDVDWGEVDYLIVDTPPGTSDEHLSVVRYLATAHIDGAVIITTPQEVSLQDVRKEINFCRKVKLPIIGVVENMSGFICPKCKKESQIFPPTTGGAELMCQDLEVPLLGRVPLDPLIGKNCDKGQSFFIDAPDSPATLAYRSIIQRIQEFCNLHQSKEENLISS.

Met1 carries the post-translational modification N-acetylmethionine. [4Fe-4S] cluster is bound by residues Cys8, Cys22, Cys25, and Cys31. 62-69 (GKGGVGKS) contributes to the ATP binding site. The [4Fe-4S] cluster site is built by Cys235 and Cys238. Ser319 bears the Phosphoserine mark.

Belongs to the Mrp/NBP35 ATP-binding proteins family. NUBP1/NBP35 subfamily. Heterotetramer of 2 NUBP1 and 2 NUBP2 chains. Interacts with KIFC1. Interacts with NUBP2. Interacts with the BBS/CCT complex subunit CCT1. Requires [4Fe-4S] cluster as cofactor.

It is found in the cytoplasm. It localises to the nucleus. The protein localises to the cell projection. Its subcellular location is the cytoskeleton. The protein resides in the cilium axoneme. It is found in the cilium basal body. It localises to the microtubule organizing center. The protein localises to the centrosome. Its subcellular location is the centriole. Functionally, component of the cytosolic iron-sulfur (Fe/S) protein assembly (CIA) machinery. Required for maturation of extramitochondrial Fe-S proteins. The NUBP1-NUBP2 heterotetramer forms a Fe-S scaffold complex, mediating the de novo assembly of an Fe-S cluster and its transfer to target apoproteins. Implicated in the regulation of centrosome duplication. Negatively regulates cilium formation and structure. This chain is Cytosolic Fe-S cluster assembly factor NUBP1, found in Homo sapiens (Human).